A 197-amino-acid polypeptide reads, in one-letter code: Protein-S-isoprenylcysteine O-methyltransferase B (197 aa).

Helical transmembrane passes span 16–36, 52–72, and 81–101; these read MFLAIIFFHTSEYILAIAIHG, ALAMLISVLEYIAEIVFFPGL, and FGLTMIILGEILRKTAIITAG. Residues 116 to 119, tyrosine 124, and 129 to 132 contribute to the S-adenosyl-L-methionine site; these read HKLV and HPSY. A helical membrane pass occupies residues 140 to 160; sequence VGTQVMLCNPISAIAFAVVVW. Position 166 (arginine 166) interacts with substrate. Glutamate 170 lines the S-adenosyl-L-methionine pocket.

This sequence belongs to the class VI-like SAM-binding methyltransferase superfamily. Isoprenylcysteine carboxyl methyltransferase family. The cofactor is Zn(2+). As to expression, expressed in flowers, stems, leaves, roots and siliques. Detected in apices and vascular tissues of leaves and roots, in the stigma and in the filaments and anthers of stamen. Not found in petioles or hypocotyls.

It is found in the endoplasmic reticulum membrane. The enzyme catalyses [protein]-C-terminal S-[(2E,6E)-farnesyl]-L-cysteine + S-adenosyl-L-methionine = [protein]-C-terminal S-[(2E,6E)-farnesyl]-L-cysteine methyl ester + S-adenosyl-L-homocysteine. Its activity is regulated as follows. Inhibited by farnesylthioacetic acid (FTAA) and N-acetyl-S-trans, trans-farnesyl-l-cysteine (AFC). Catalyzes the post-translational methylation of isoprenylated C-terminal cysteine residues, resulting in the modulation of the function of prenylated proteins. Involved in negative regulation of abscisic acid signaling. Carboxyl methylation is a reversible and potentially regulated step in the post-translational modification of prenylated proteins. This Arabidopsis thaliana (Mouse-ear cress) protein is Protein-S-isoprenylcysteine O-methyltransferase B.